The primary structure comprises 107 residues: Ferredoxin-1 (107 aa).

4Fe-4S ferredoxin-type domains follow at residues 2–30 and 31–60; these read AFVV…YEGP and NFLV…SEDE. The [3Fe-4S] cluster site is built by Cys9 and Cys17. Residues Cys21, Cys40, Cys43, and Cys46 each contribute to the [4Fe-4S] cluster site. Cys50 is a [3Fe-4S] cluster binding site. Residues 84–107 are disordered; the sequence is EKKDPLPDAEDWDGVKGKLQHLER. Basic and acidic residues predominate over residues 96-107; sequence DGVKGKLQHLER.

[4Fe-4S] cluster serves as cofactor. It depends on [3Fe-4S] cluster as a cofactor.

Ferredoxins are iron-sulfur proteins that transfer electrons in a wide variety of metabolic reactions. This ferredoxin could play a role in regulating gene expression by interacting directly with DNA. The protein is Ferredoxin-1 (fdxA) of Azotobacter vinelandii.